The following is a 557-amino-acid chain: Hydroxylamine reductase (557 aa).

Cys-3, Cys-6, Cys-19, and Cys-26 together coordinate [4Fe-4S] cluster. Hybrid [4Fe-2O-2S] cluster contacts are provided by His-253, Glu-277, Cys-321, Cys-408, Cys-436, Cys-461, Glu-495, and Lys-497. Position 408 is a cysteine persulfide (Cys-408).

It belongs to the HCP family. [4Fe-4S] cluster serves as cofactor. The cofactor is hybrid [4Fe-2O-2S] cluster.

Its subcellular location is the cytoplasm. The catalysed reaction is A + NH4(+) + H2O = hydroxylamine + AH2 + H(+). Its function is as follows. Catalyzes the reduction of hydroxylamine to form NH(3) and H(2)O. The sequence is that of Hydroxylamine reductase from Acidiphilium cryptum (strain JF-5).